Reading from the N-terminus, the 267-residue chain is Undecaprenyl-diphosphatase (267 aa).

The next 7 membrane-spanning stretches (helical) occupy residues 1–21 (MSLF…FLPI), 40–60 (GQAI…LYFW), 85–105 (LAFL…FLEV), 112–132 (LRSI…LYWA), 189–209 (AMLM…AEVI), 219–239 (DGAI…TLMF), and 245–265 (VSFT…LVIA).

Belongs to the UppP family.

It is found in the cell inner membrane. The catalysed reaction is di-trans,octa-cis-undecaprenyl diphosphate + H2O = di-trans,octa-cis-undecaprenyl phosphate + phosphate + H(+). In terms of biological role, catalyzes the dephosphorylation of undecaprenyl diphosphate (UPP). Confers resistance to bacitracin. The sequence is that of Undecaprenyl-diphosphatase from Jannaschia sp. (strain CCS1).